Consider the following 511-residue polypeptide: Dihydrolipoyl dehydrogenase, mitochondrial (511 aa).

FAD-binding positions include 75-84 (EKRGTLGGTC), Lys-93, Gly-157, and 187-189 (TGS). Residues Cys-84 and Cys-89 are joined by a disulfide bond. Residues 224–231 (GGGIIGLE), Glu-247, Leu-281, and Gly-316 contribute to the NAD(+) site. Residues Asp-357 and 363–366 (MLAH) each bind FAD. His-489 serves as the catalytic Proton acceptor.

It belongs to the class-I pyridine nucleotide-disulfide oxidoreductase family. As to quaternary structure, homodimer. It depends on FAD as a cofactor.

Its subcellular location is the mitochondrion matrix. The enzyme catalyses N(6)-[(R)-dihydrolipoyl]-L-lysyl-[protein] + NAD(+) = N(6)-[(R)-lipoyl]-L-lysyl-[protein] + NADH + H(+). Its function is as follows. Lipoamide dehydrogenase is a component of the alpha-ketoacid dehydrogenase complexes. Malfunction of this protein blocks the progression of cell cycle from G1 to S phase. The protein is Dihydrolipoyl dehydrogenase, mitochondrial (dld1) of Schizosaccharomyces pombe (strain 972 / ATCC 24843) (Fission yeast).